The following is a 50-amino-acid chain: Protein PsbN (50 aa).

A helical transmembrane segment spans residues 14–34 (IAVTILALLLALTGFGLWTAF).

The protein belongs to the PsbN family.

Its subcellular location is the cellular thylakoid membrane. Functionally, may play a role in photosystem I and II biogenesis. The chain is Protein PsbN from Prochlorococcus marinus (strain MIT 9301).